Consider the following 364-residue polypeptide: MPHSHPALTPEQKKELSDIAHRIVAPGKGILAADESTGSIAKRLQSIGTENTEENRRFYRQLLLTADDRVNPCIGGVILFHETLYQKADDGRPFPQVIKSKGGVVGIKVDKGVVPLAGTNGETTTQGLDGLSERCAQYKKDGADFAKWRCVLKIGEHTPSALAIMENANVLARYASICQQNGIVPIVEPEILPDGDHDLKRCQYVTEKVLAAVYKALSDHHIYLEGTLLKPNMVTPGHACTQKYSHEEIAMATVTALRRTVPPAVTGVTFLSGGQSEEEASINLNAINKCPLLKPWALTFSYGRALQASALKAWGGKKENLKAAQEEYVKRALANSLACQGKYTPSGQAGAAASESLFISNHAY.

T9 is modified (phosphothreonine). Residues S36 and S39 each carry the phosphoserine modification. K42 bears the N6-acetyllysine; alternate mark. K42 participates in a covalent cross-link: Glycyl lysine isopeptide (Lys-Gly) (interchain with G-Cter in SUMO1); alternate. K42 is covalently cross-linked (Glycyl lysine isopeptide (Lys-Gly) (interchain with G-Cter in SUMO2); alternate). R43 is a beta-D-fructose 1,6-bisphosphate binding site. Position 46 is a phosphoserine (S46). At K99 the chain carries N6-(2-hydroxyisobutyryl)lysine. K108 is modified (N6-acetyllysine). N6-acetyllysine; alternate is present on K111. K111 bears the N6-malonyllysine; alternate mark. S132 bears the Phosphoserine mark. K147 carries the post-translational modification N6-(2-hydroxyisobutyryl)lysine. Residue E188 is the Proton acceptor of the active site. The active-site Schiff-base intermediate with dihydroxyacetone-P is the K230. S272 bears the Phosphoserine mark. Beta-D-fructose 1,6-bisphosphate-binding positions include 272–274, S301, and R304; that span reads SGG. Position 312 is an N6-malonyllysine (K312). K330 carries the N6-acetyllysine modification. N361 bears the Deamidated asparagine; in form beta mark.

The protein belongs to the class I fructose-bisphosphate aldolase family. As to quaternary structure, homotetramer. Interacts with SNX9 and WAS. Interacts with FBP2; the interaction blocks FBP2 inhibition by physiological concentrations of AMP and reduces inhibition by Ca(2+). Post-translationally, asn-361 in form alpha is deaminated to Asp in form beta.

The protein localises to the cytoplasm. The protein resides in the myofibril. It is found in the sarcomere. Its subcellular location is the i band. It localises to the m line. The enzyme catalyses beta-D-fructose 1,6-bisphosphate = D-glyceraldehyde 3-phosphate + dihydroxyacetone phosphate. It functions in the pathway carbohydrate degradation; glycolysis; D-glyceraldehyde 3-phosphate and glycerone phosphate from D-glucose: step 4/4. In terms of biological role, plays a key role in glycolysis and gluconeogenesis. In addition, may also function as scaffolding protein. The chain is Fructose-bisphosphate aldolase A (ALDOA) from Oryctolagus cuniculus (Rabbit).